A 109-amino-acid chain; its full sequence is Preprofallaxidin-8 (109 aa).

The first 22 residues, M1–C22, serve as a signal peptide directing secretion. Residues E23–R46 constitute a propeptide that is removed on maturation. The tract at residues R27–R46 is disordered. Acidic residues predominate over residues E30–S42. Position 62 is a leucine amide (L62). The propeptide occupies S66–R70. A Methionine amide modification is found at M75. Positions S79–R83 are excised as a propeptide. M88 carries the post-translational modification Methionine amide. 2 propeptides span residues S92–R96 and A108.

This sequence belongs to the frog skin active peptide (FSAP) family. Brevinin subfamily. In terms of tissue distribution, expressed by the skin glands.

It is found in the secreted. Functionally, fallaxidin-2.1 shows no antibacterial activity against Gram-positive or Gram-negative bacteria. Does not inhibit the formation of NO by neuronal nitric oxide synthase. Has no effect on splenocyte proliferation or smooth muscle contraction. Its function is as follows. Fallaxidin-3.2 shows antibacterial activity against the Gram-positive bacteria E.faecalis (MIC=100 uM) and L.lactis (MIC=500 uM). No antibacterial activity against the Gram-positive bacteria B.cereus, L.innocua, M.luteus, S.epidermidis, S.uberis and S.aureus, or the Gram-negative bacteria E.cloacae and E.coli. This chain is Preprofallaxidin-8, found in Litoria fallax (Eastern dwarf tree frog).